A 396-amino-acid chain; its full sequence is NADH-quinone oxidoreductase subunit D 2 (396 aa).

Belongs to the complex I 49 kDa subunit family. NDH-1 is composed of 14 different subunits. Subunits NuoB, C, D, E, F, and G constitute the peripheral sector of the complex.

The protein localises to the cell inner membrane. The catalysed reaction is a quinone + NADH + 5 H(+)(in) = a quinol + NAD(+) + 4 H(+)(out). Its function is as follows. NDH-1 shuttles electrons from NADH, via FMN and iron-sulfur (Fe-S) centers, to quinones in the respiratory chain. The immediate electron acceptor for the enzyme in this species is believed to be ubiquinone. Couples the redox reaction to proton translocation (for every two electrons transferred, four hydrogen ions are translocated across the cytoplasmic membrane), and thus conserves the redox energy in a proton gradient. This Beijerinckia indica subsp. indica (strain ATCC 9039 / DSM 1715 / NCIMB 8712) protein is NADH-quinone oxidoreductase subunit D 2.